We begin with the raw amino-acid sequence, 1051 residues long: MEPGRGGVETVGKFEFSRKDLIGHGAFAVVFKGRHREKHDLEVAVKCINKKNLAKSQTLLGKEIKILKELKHENIVALYDFQEMANSVYLVMEYCNGGDLADYLHTMRTLSEDTVRLFLQQIAGAMRLLHSKGIIHRDLKPQNILLSNPGGRRANPSNIRVKIADFGFARYLQSNMMAATLCGSPMYMAPEVIMSQHYDGKADLWSIGTIVYQCLTGKAPFQASSPQDLRLFYEKNKTLVPAIPRETSAPLRQLLLALLQRNHKDRMDFDEFFHHPFLDASTPIKKSPPVPVPSYPSSGSGSSSSSSSASHLASPPSLGEMPQLQKTLTSPADAAGFLQGSRDSGGSSKDSCDTDDFVMVPAQFPGDLVAEAASAKPPPDSLLCSGSSLVASAGLESHGRTPSPSPTCSSSPSPSGRPGPFSSNRYGASVPIPVPTQVHNYQRIEQNLQSPTQQQTARSSAIRRSGSTTPLGFGRASPSPPSHTDGAMLARKLSLGGGRPYTPSPQVGTIPERPSWSRVPSPQGADVRVGRSPRPGSSVPEHSPRTTGLGCRLHSAPNLSDFHVVRPKLPKPPTDPLGATFSPPQTSAPQPCPGLQSCRPLRGSPKLPDFLQRSPLPPILGSPTKAGPSFDFPKTPSSQNLLTLLARQGVVMTPPRNRTLPDLSEASPFHGQQLGSGLRPAEDTRGPFGRSFSTSRITDLLLKAAFGTQASDSGSTDSLQEKPMEIAPSAGFGGTLHPGARGGGASSPAPVVFTVGSPPSGATPPQSTRTRMFSVGSSSSLGSTGSSSARHLVPGACGEAPELSAPGHCCSLADPLAANLEGAVTFEAPDLPEETLMEQEHTETLHSLRFTLAFAQQVLEIAALKGSASEAAGGPEYQLQESVVADQISQLSREWGFAEQLVLYLKVAELLSSGLQTAIDQIRAGKLCLSSTVKQVVRRLNELYKASVVSCQGLSLRLQRFFLDKQRLLDGIHGVTAERLILSHAVQMVQSAALDEMFQHREGCVPRYHKALLLLEGLQHTLTDQADIENIAKCKLCIERRLSALLSGVYA.

The 263-residue stretch at 16 to 278 (FSRKDLIGHG…FDEFFHHPFL (263 aa)) folds into the Protein kinase domain. ATP is bound by residues 22–30 (IGHGAFAVV) and lysine 46. Residue aspartate 138 is the Proton acceptor of the active site. Lysine 162 is subject to N6-acetyllysine. Disordered stretches follow at residues 283-323 (PIKK…EMPQ), 335-358 (AGFL…DDFV), and 394-554 (GLES…CRLH). The tract at residues 287-416 (SPPVPVPSYP…TCSSSPSPSG (130 aa)) is interaction with GABARAP and GABARAPL2. Composition is skewed to low complexity over residues 295-318 (YPSS…PPSL), 340-349 (GSRDSGGSSK), and 400-423 (RTPS…PFSS). Serine 317 carries the post-translational modification Phosphoserine; by AMPK. Serine 403 and serine 450 each carry phosphoserine. Residues 437-459 (QVHNYQRIEQNLQSPTQQQTARS) show a composition bias toward polar residues. At threonine 456 the chain carries Phosphothreonine. Phosphoserine is present on residues serine 467, serine 477, serine 479, and serine 521. At serine 555 the chain carries Phosphoserine; by AMPK. The residue at position 574 (threonine 574) is a Phosphothreonine. Lysine 606 carries the N6-acetyllysine modification. Threonine 635 carries the phosphothreonine modification. Serine 637 carries the phosphoserine; by AMPK modification. Serine 638 is modified (phosphoserine). 2 disordered regions span residues 661 to 686 (PDLS…DTRG) and 727 to 787 (APSA…TGSS). Over residues 731 to 745 (GFGGTLHPGARGGGA) the composition is skewed to gly residues. Serine 757 bears the Phosphoserine; by MTOR mark. Serine 774 carries the post-translational modification Phosphoserine. Positions 774–787 (SVGSSSSLGSTGSS) are enriched in low complexity. At serine 777 the chain carries Phosphoserine; by AMPK. Positions 829 to 1051 (PDLPEETLME…LSALLSGVYA (223 aa)) are C-terminal domain; mediates interaction with SESN2.

It belongs to the protein kinase superfamily. Ser/Thr protein kinase family. APG1/unc-51/ULK1 subfamily. As to quaternary structure, interacts with GABARAP and GABARAPL2. Interacts (via C-terminus) with ATG13. Part of a complex consisting of ATG13, ATG101, ULK1 and RB1CC1. Associates with the mammalian target of rapamycin complex 1 (mTORC1) through an interaction with RPTOR; the association depends on nutrient conditions and is reduced during starvation. Interacts with FEZ1; SCOC interferes with FEZ1-binding. Interacts with TBC1D14. Interacts (phosphorylated form) with TRIM5. When phosphorylated at Ser-317, interacts with MEFV and BECN1 simultaneously. Interacts with TRIM21 and IRF3, in the presence of TRIM21. Interacts with SESN2. Interacts with SQSTM1. Interacts with C9orf72. Interacts with WDR45. Interacts with ATG13; this interaction is increased in the absence of TMEM39A. Interacts with WIPI2. Interacts with ATP2A2. Interacts with AMBRA1. Interacts with Irgm1; promoting the coassembly of ULK1 and BECN1. Autophosphorylated. Phosphorylated under nutrient-rich conditions; dephosphorylated during starvation or following treatment with rapamycin. In response to nutrient limitation, phosphorylated and activated by AMPK, leading to activate autophagy. Under nutrient sufficiency, phosphorylated by MTOR/mTOR, disrupting the interaction with AMPK and preventing activation of ULK1. In terms of processing, ubiquitinated via 'Lys-63'-linkage by a complex composed of AMBRA1 and TRAF6 following autophagy induction, promoting ULK1 stability and kinase activity. Deubiquitinated by USP20; leading to ULK1 stability and autophagy initiation. Post-translationally, acetylated by KAT5/TIP60 under autophagy induction, promoting protein kinase activity.

Its subcellular location is the cytoplasm. The protein localises to the cytosol. It localises to the preautophagosomal structure. The catalysed reaction is L-seryl-[protein] + ATP = O-phospho-L-seryl-[protein] + ADP + H(+). It carries out the reaction L-threonyl-[protein] + ATP = O-phospho-L-threonyl-[protein] + ADP + H(+). Its activity is regulated as follows. Acetylation by KAT5/TIP60 stimulates the protein kinase activity. The protein kinase activity is activated by unanchored 'Lys-63'-linked polyubiquitin chains: unanchored 'Lys-63'-linked polyubiquitin chains are catalyzed by TRIM32 in an AMBRA1-dependent manner. Functionally, serine/threonine-protein kinase involved in autophagy in response to starvation. Acts upstream of phosphatidylinositol 3-kinase PIK3C3 to regulate the formation of autophagophores, the precursors of autophagosomes. Part of regulatory feedback loops in autophagy: acts both as a downstream effector and negative regulator of mammalian target of rapamycin complex 1 (mTORC1) via interaction with RPTOR. Activated via phosphorylation by AMPK and also acts as a regulator of AMPK by mediating phosphorylation of AMPK subunits PRKAA1, PRKAB2 and PRKAG1, leading to negatively regulate AMPK activity. May phosphorylate ATG13/KIAA0652 and RPTOR; however such data need additional evidences. Plays a role early in neuronal differentiation and is required for granule cell axon formation. Also phosphorylates SESN2 and SQSTM1 to regulate autophagy. Phosphorylates FLCN, promoting autophagy. Phosphorylates AMBRA1 in response to autophagy induction, releasing AMBRA1 from the cytoskeletal docking site to induce autophagosome nucleation. Phosphorylates ATG4B, leading to inhibit autophagy by decreasing both proteolytic activation and delipidation activities of ATG4B. The protein is Serine/threonine-protein kinase ULK1 (Ulk1) of Mus musculus (Mouse).